The sequence spans 176 residues: Ferritin, liver middle subunit (176 aa).

Positions 7 to 156 constitute a Ferritin-like diiron domain; the sequence is QNYHRDCEAA…DFITNLSRMD (150 aa). Residues glutamate 24, glutamate 59, histidine 62, glutamate 104, and glutamine 138 each contribute to the Fe cation site.

The protein belongs to the ferritin family. In liver, forms a heteromer consisting of middle and heavy subunits. The functional molecule forms a roughly spherical shell with a diameter of 12 nm and contains a central cavity into which the insoluble mineral iron core is deposited. As to expression, liver (at protein level).

It carries out the reaction 4 Fe(2+) + O2 + 4 H(+) = 4 Fe(3+) + 2 H2O. In terms of biological role, stores iron in a soluble, non-toxic, readily available form. Important for iron homeostasis. Has ferroxidase activity. Iron is taken up in the ferrous form and deposited as ferric hydroxides after oxidation. The polypeptide is Ferritin, liver middle subunit (Trematomus bernacchii (Emerald rockcod)).